The sequence spans 287 residues: Elongation factor Ts (287 aa).

The segment at 80–83 (TDFL) is involved in Mg(2+) ion dislocation from EF-Tu.

This sequence belongs to the EF-Ts family.

It localises to the cytoplasm. In terms of biological role, associates with the EF-Tu.GDP complex and induces the exchange of GDP to GTP. It remains bound to the aminoacyl-tRNA.EF-Tu.GTP complex up to the GTP hydrolysis stage on the ribosome. The chain is Elongation factor Ts from Pseudomonas putida (strain ATCC 700007 / DSM 6899 / JCM 31910 / BCRC 17059 / LMG 24140 / F1).